Reading from the N-terminus, the 501-residue chain is Glutamyl-tRNA(Gln) amidotransferase subunit A (501 aa).

Residues Lys80 and Ser155 each act as charge relay system in the active site. Catalysis depends on Ser179, which acts as the Acyl-ester intermediate.

This sequence belongs to the amidase family. GatA subfamily. In terms of assembly, heterotrimer of A, B and C subunits.

It catalyses the reaction L-glutamyl-tRNA(Gln) + L-glutamine + ATP + H2O = L-glutaminyl-tRNA(Gln) + L-glutamate + ADP + phosphate + H(+). Functionally, allows the formation of correctly charged Gln-tRNA(Gln) through the transamidation of misacylated Glu-tRNA(Gln) in organisms which lack glutaminyl-tRNA synthetase. The reaction takes place in the presence of glutamine and ATP through an activated gamma-phospho-Glu-tRNA(Gln). The sequence is that of Glutamyl-tRNA(Gln) amidotransferase subunit A from Cutibacterium acnes (strain DSM 16379 / KPA171202) (Propionibacterium acnes).